The sequence spans 183 residues: Adenine phosphoribosyltransferase (183 aa).

It belongs to the purine/pyrimidine phosphoribosyltransferase family. Homodimer.

The protein localises to the cytoplasm. It catalyses the reaction AMP + diphosphate = 5-phospho-alpha-D-ribose 1-diphosphate + adenine. Its pathway is purine metabolism; AMP biosynthesis via salvage pathway; AMP from adenine: step 1/1. Functionally, catalyzes a salvage reaction resulting in the formation of AMP, that is energically less costly than de novo synthesis. The polypeptide is Adenine phosphoribosyltransferase (Shewanella halifaxensis (strain HAW-EB4)).